The sequence spans 327 residues: Thiamine-binding periplasmic protein (327 aa).

The N-terminal stretch at 1-18 (MLKKYLPLLLLCAAPAFA) is a signal peptide. Thiamine contacts are provided by residues 59–60 (DG), 161–162 (ST), W197, and 215–218 (YTTS).

The protein belongs to the bacterial solute-binding protein 1 family. In terms of assembly, the complex is composed of two ATP-binding proteins (ThiQ), two transmembrane proteins (ThiP) and a solute-binding protein (ThiB).

It localises to the periplasm. Functionally, part of the ABC transporter complex ThiBPQ involved in thiamine import. Is also involved in thiamine pyrophosphate transport. The chain is Thiamine-binding periplasmic protein from Salmonella typhimurium (strain LT2 / SGSC1412 / ATCC 700720).